Here is a 60-residue protein sequence, read N- to C-terminus: Large ribosomal subunit protein bL32 (60 aa).

This sequence belongs to the bacterial ribosomal protein bL32 family.

The protein is Large ribosomal subunit protein bL32 of Streptococcus pneumoniae serotype 4 (strain ATCC BAA-334 / TIGR4).